Consider the following 1165-residue polypeptide: Adhesion G-protein coupled receptor G6 (1165 aa).

Positions methionine 1 to cysteine 30 are cleaved as a signal peptide. Topologically, residues valine 31–lysine 832 are extracellular. A disulfide bridge connects residues cysteine 41 and cysteine 67. Residues cysteine 41–valine 149 form the CUB domain. Ca(2+) is bound by residues glutamate 89 and aspartate 97. Residues cysteine 94 and cysteine 111 are joined by a disulfide bond. Asparagine 121 carries N-linked (GlcNAc...) asparagine glycosylation. The Ca(2+) site is built by aspartate 134, serine 136, and isoleucine 137. N-linked (GlcNAc...) asparagine glycosylation occurs at asparagine 143. Residues arginine 154 to cysteine 356 enclose the Pentraxin (PTX) domain. 2 cysteine pairs are disulfide-bonded: cysteine 186–cysteine 254 and cysteine 231–cysteine 277. Asparagine 258, asparagine 314, asparagine 324, asparagine 353, asparagine 370, asparagine 410, asparagine 417, asparagine 424, asparagine 458, asparagine 462, and asparagine 478 each carry an N-linked (GlcNAc...) asparagine glycan. Residues aspartate 446–cysteine 807 form a mediates interaction with laminin-2 region. 2 disulfide bridges follow: cysteine 498-cysteine 533 and cysteine 521-cysteine 550. N-linked (GlcNAc...) asparagine glycans are attached at residues asparagine 536, asparagine 549, asparagine 563, asparagine 570, asparagine 665, asparagine 674, asparagine 720, asparagine 746, asparagine 781, and asparagine 788. Positions proline 640 to alanine 823 constitute a GAIN-B domain. Cystine bridges form between cysteine 773–cysteine 805 and cysteine 792–cysteine 807. A GPS region spans residues cysteine 773–alanine 823. The stachel stretch occupies residues histidine 812–proline 820. The helical transmembrane segment at valine 833–leucine 853 threads the bilayer. The Cytoplasmic portion of the chain corresponds to leucine 854–asparagine 873. The helical transmembrane segment at leucine 874–phenylalanine 894 threads the bilayer. Residues glycine 895–leucine 899 are Extracellular-facing. A helical membrane pass occupies residues cysteine 900 to leucine 920. At glutamate 921–tyrosine 940 the chain is on the cytoplasmic side. Residues isoleucine 941–valine 961 traverse the membrane as a helical segment. Over serine 962 to serine 994 the chain is Extracellular. Residues cysteine 995–valine 1015 form a helical membrane-spanning segment. At glutamine 1016–serine 1039 the chain is on the cytoplasmic side. The chain crosses the membrane as a helical span at residues valine 1040–proline 1060. Residues leucine 1061 to asparagine 1062 are Extracellular-facing. A helical transmembrane segment spans residues isoleucine 1063 to phenylalanine 1083. Asparagine 1073 contacts 17alpha-hydroxyprogesterone. The Cytoplasmic segment spans residues histidine 1084–serine 1165. Positions asparagine 1126–tyrosine 1154 are enriched in low complexity. The tract at residues asparagine 1126–serine 1165 is disordered. Serine 1135 and serine 1138 each carry phosphoserine.

Belongs to the G-protein coupled receptor 2 family. Adhesion G-protein coupled receptor (ADGR) subfamily. In terms of assembly, heterodimer of 2 chains generated by proteolytic processing; the large extracellular N-terminal fragment and the membrane-bound C-terminal fragment predominantly remain associated and non-covalently linked. Interacts with Laminin-2; this interaction stabilizes the receptor in an inactive state. Laminin-2 polymerization could facilitate ADGRG6-NTF removal, thereby exposing the tethered agonist to drive myelination. Interacts with PRNP. Interacts with ITGB1. Interacts with LRP1. Post-translationally, proteolytically cleaved into 2 conserved sites: one in the GPS region of the GAIN-B domain (S1 site) and the other in the middle of the extracellular domain (S2 site). The proteolytic cleavage at S1 site generates an extracellular subunit and a seven-transmembrane subunit. Furin is involved in the cleavage of the S2 site generating a soluble fragment. Processing at the GPS region occurred independent of and probably prior to the cleavage at the S2 site. Proteolytic cleavage is required for activation of the receptor. As to expression, expressed at high levels in the heart, somite and otic vesicle during embryogenesis and in adult lung.

It localises to the cell membrane. Forms a heterodimer of 2 chains generated by proteolytic processing that remain associated through non-covalent interactions mediated by the GAIN-B domain. In the inactivated receptor, the Stachel sequence (also named stalk) is embedded in the GAIN-B domain, where it adopts a beta-strand conformation. On activation, the Stachel moves into the 7 transmembrane region and adopts a twisted hook-shaped configuration that forms contacts within the receptor, leading to coupling of a G-alpha protein, which activates signaling. The cleaved GAIN-B and N-terminal domains can then dissociate from the rest of the receptor. Adhesion G-protein coupled receptor (aGPCR) for steroid hormones, such as progesterone and 17alpha-hydroxyprogesterone (17OHP). Involved in many biological processes, such as myelination, sprouting angiogenesis, placenta, ear and cartilage development. Ligand binding causes a conformation change that triggers signaling via guanine nucleotide-binding proteins (G proteins) and modulates the activity of downstream effectors, such as adenylate cyclase. ADGRG6 is coupled to G(i) G alpha proteins and mediates inhibition of adenylate cyclase. Also able to couple to G(q) G proteins. Involved in myelination of the peripheral nervous system: required for differentiation of promyelinating Schwann cells and for normal myelination of axons. Also acts as a regulator of body length and bone mass. Acts as a regulator of blood-brain barrier formation in the central nervous system vie its association with LRP1 and ITGB1. The chain is Adhesion G-protein coupled receptor G6 from Mus musculus (Mouse).